The chain runs to 272 residues: MTDAPIGIFDSGVGGLTVARAIRDQLPNESILYVGDTTHSPYGPKPIADVRRYSLEVLDLLVEQGVKLLVIACNTASSAVLRDARERYAVPVVEVIQPAVRRAVAATRTGRVGVIGTVGTIASRAYEDAFAAAPDLRLFPRACPRFVEFVETGVTSGDEVLRVAAEYLQPLRDADVDTLVLGCTHYPFLEGAISYVMGEGVSLVSSDIETAKDVYRILVSGGFERHDSAPPTVRYEATGLDAEHFLRLAHRFIGPEVSQVDLVQTGVIDLSL.

Substrate contacts are provided by residues 10–11 (DS) and 42–43 (YG). C73 serves as the catalytic Proton donor/acceptor. Substrate is bound at residue 74-75 (NT). Catalysis depends on C183, which acts as the Proton donor/acceptor. Residue 184-185 (TH) participates in substrate binding.

This sequence belongs to the aspartate/glutamate racemases family.

It catalyses the reaction L-glutamate = D-glutamate. It functions in the pathway cell wall biogenesis; peptidoglycan biosynthesis. Its function is as follows. Provides the (R)-glutamate required for cell wall biosynthesis. This Leifsonia xyli subsp. xyli (strain CTCB07) protein is Glutamate racemase.